We begin with the raw amino-acid sequence, 186 residues long: HGPRTase-like protein 3 (186 aa).

Belongs to the purine/pyrimidine phosphoribosyltransferase family. Archaeal HPRT subfamily.

Functionally, may catalyze a purine salvage reaction, the substrate is unknown. The sequence is that of HGPRTase-like protein 3 from Haloterrigena turkmenica (strain ATCC 51198 / DSM 5511 / JCM 9101 / NCIMB 13204 / VKM B-1734 / 4k) (Halococcus turkmenicus).